A 540-amino-acid chain; its full sequence is MAKDIKFSENARRSLLKGVDKLADTVKTTIGPKGRNVVLEQSYGNPDITNDGVTIAKSIELKDRYENMGAKLVAEAAQKTNDIAGDGTTTATVLTQAIVREGMKNVTAGANPVGIRRGIEKATKAAVDELHKISHKVESKDQIANVAAVSSASKEVGALIADAMEKVGHDGVITIEDSRGINTELSVVEGMQFDRGYLSQYMVTDNDKMEADLDNPYILITDKKISNIQDILPLLQEIVQQGKSLLIIADDITGEALPTLVLNKIRGTFNVVAVKAPGFGDRRKAQLQDIAALTGGTVITEDLGLELKDTKIDQLGQARRITVTKDSTTIVDGAGSKEAIDERVDTIRKQIEDSTSDFDKKKLQERLAKLTGGVAVIHVGAATETELKERRYRIEDALNSTRAAVDEGYVAGGGTALVNVEKAVREVKGETTDEQTGINIVLRALSAPVRQIAENAGKDGSVILDKLEHQENEIGYNAATDKWENMVDAGIIDPTKVTRTALQNAASIAALLLTTEAVVAEIPEPKQSAPQGGAGAPMGM.

Residues 29-32 (TIGP), 86-90 (DGTTT), Gly413, 477-479 (NAA), and Asp493 each bind ATP.

This sequence belongs to the chaperonin (HSP60) family. As to quaternary structure, forms a cylinder of 14 subunits composed of two heptameric rings stacked back-to-back. Interacts with the co-chaperonin GroES.

It localises to the cytoplasm. It catalyses the reaction ATP + H2O + a folded polypeptide = ADP + phosphate + an unfolded polypeptide.. Its function is as follows. Together with its co-chaperonin GroES, plays an essential role in assisting protein folding. The GroEL-GroES system forms a nano-cage that allows encapsulation of the non-native substrate proteins and provides a physical environment optimized to promote and accelerate protein folding. The sequence is that of Chaperonin GroEL from Lactobacillus helveticus (strain DPC 4571).